Consider the following 1759-residue polypeptide: Zinc finger protein castor homolog 1 (1759 aa).

Disordered stretches follow at residues 1–26 and 46–175; these read MDLG…PKRK and KRAD…SSLR. 2 stretches are compositionally biased toward basic and acidic residues: residues 77-88 and 137-160; these read PRSEEDKRRAVI and EEPS…KEDS. Polar residues predominate over residues 161–171; it reads GPSTRQASGEA. K288 participates in a covalent cross-link: Glycyl lysine isopeptide (Lys-Gly) (interchain with G-Cter in SUMO2). The tract at residues 374–420 is disordered; the sequence is SKYDVRGIQKPGPAKVPPTPSLAPAPLASVPSAPSAPGPGPEPPASL. A compositionally biased stretch (pro residues) spans 387–396; the sequence is AKVPPTPSLA. Residues 397 to 406 are compositionally biased toward low complexity; it reads PAPLASVPSA. A compositionally biased stretch (pro residues) spans 407–417; it reads PSAPGPGPEPP. C2H2-type zinc fingers lie at residues 551-575, 610-634, and 668-692; these read YHCM…ENFH, FHCR…KSYH, and FHCI…KRKH. 4 disordered regions span residues 686–723, 736–776, 824–843, and 889–949; these read TSHK…SSND, SSLS…SGLL, VSSG…VASG, and ATFD…AVPA. Basic residues predominate over residues 687-698; that stretch reads SHKRKHERRHIR. Residues 699 to 712 are compositionally biased toward low complexity; sequence SSGALGLPPSLLGA. Phosphoserine is present on residues S720 and S721. The segment covering 736 to 764 has biased composition (low complexity); it reads SSLSASPTSQQSSASLAAATAATEAGPSA. The span at 925–939 shows a compositional bias: basic and acidic residues; the sequence is ASQDRSLDLTVKEPS. A Glycyl lysine isopeptide (Lys-Gly) (interchain with G-Cter in SUMO2) cross-link involves residue K975. Position 981 is a phosphoserine (S981). The C2H2-type 4 zinc-finger motif lies at 1031–1055; it reads FHCVVEECGALFSTLDGAIKHANFH. Residues 1067-1111 form a disordered region; the sequence is TEAAFPASAAETKPPMAPSSPPVPPVTTATVSSLEGPAPSPASVP. Over residues 1081-1091 the composition is skewed to pro residues; it reads PMAPSSPPVPP. The C2H2-type 5 zinc finger occupies 1300 to 1324; that stretch reads FHCIREGCQFSFLLKHQMTSHARKH. Positions 1367-1392 are disordered; the sequence is ESSTMDRSCSSTPVGNESTAAGNTIS. 3 consecutive C2H2-type zinc fingers follow at residues 1457–1481, 1515–1537, and 1571–1595; these read YHCT…AQHH, FHCL…RKHH, and FHCT…KRKH. Disordered stretches follow at residues 1589–1620 and 1643–1736; these read DSHK…DGSL and LGDA…AGAR. Over residues 1655–1673 the composition is skewed to low complexity; it reads AAPGPREGAAAAAAAAGES. Residues 1674-1723 show a composition bias toward acidic residues; it reads SQEDEEEELELPEEEAEDDEDEDDDEDDDDEDDDEDDDDEDLRTDSEESL. Residues 1724–1736 are compositionally biased toward low complexity; it reads PEAAAEAAGAGAR.

In terms of tissue distribution, expressed in heart, lung, skeletal muscle, pancreas, testis, small intestine, and stomach, but it is not detectable in the adult brain.

Its subcellular location is the nucleus. In terms of biological role, transcriptional activator. Involved in vascular assembly and morphogenesis through direct transcriptional regulation of EGFL7. This chain is Zinc finger protein castor homolog 1 (CASZ1), found in Homo sapiens (Human).